The chain runs to 546 residues: Probable protein kinase UbiB (546 aa).

Residues 124-502 (DFEIKPLASA…HVRQGQSRYF (379 aa)) form the Protein kinase domain. Residues 130–138 (LASASIAQV) and Lys153 each bind ATP. Catalysis depends on Asp288, which acts as the Proton acceptor. 2 helical membrane passes run 501-521 (YFLG…VSRP) and 522-542 (EWGL…FVGW).

It belongs to the ABC1 family. UbiB subfamily.

Its subcellular location is the cell inner membrane. Its pathway is cofactor biosynthesis; ubiquinone biosynthesis [regulation]. In terms of biological role, is probably a protein kinase regulator of UbiI activity which is involved in aerobic coenzyme Q (ubiquinone) biosynthesis. The chain is Probable protein kinase UbiB from Escherichia coli O127:H6 (strain E2348/69 / EPEC).